The following is a 284-amino-acid chain: Proteasome subunit beta 1 (284 aa).

A propeptide spans 1 to 54 (MAQRDTGGRLGAEFFTPGDSSFTAFLAAHRPALLSTRGLLPDGVRAAPDRVPHG) (removed in mature form; by autocatalysis). Catalysis depends on T55, which acts as the Nucleophile. Positions 256–277 (RLPESETEDLSREMVEQRHTRP) are enriched in basic and acidic residues. Residues 256-284 (RLPESETEDLSREMVEQRHTRPDGPTAAM) form a disordered region.

The protein belongs to the peptidase T1B family. In terms of assembly, the 20S proteasome core is composed of 14 alpha and 14 beta subunits that assemble into four stacked heptameric rings, resulting in a barrel-shaped structure. The two inner rings, each composed of seven catalytic beta subunits, are sandwiched by two outer rings, each composed of seven alpha subunits. The catalytic chamber with the active sites is on the inside of the barrel. Has a gated structure, the ends of the cylinder being occluded by the N-termini of the alpha-subunits. Is capped by the proteasome-associated ATPase, ARC.

It localises to the cytoplasm. The catalysed reaction is Cleavage of peptide bonds with very broad specificity.. It functions in the pathway protein degradation; proteasomal Pup-dependent pathway. With respect to regulation, the formation of the proteasomal ATPase ARC-20S proteasome complex, likely via the docking of the C-termini of ARC into the intersubunit pockets in the alpha-rings, may trigger opening of the gate for substrate entry. Interconversion between the open-gate and close-gate conformations leads to a dynamic regulation of the 20S proteasome proteolysis activity. Component of the proteasome core, a large protease complex with broad specificity involved in protein degradation. In Streptomyces avermitilis (strain ATCC 31267 / DSM 46492 / JCM 5070 / NBRC 14893 / NCIMB 12804 / NRRL 8165 / MA-4680), this protein is Proteasome subunit beta 1.